Reading from the N-terminus, the 427-residue chain is Trigger factor (427 aa).

Residues 163-248 form the PPIase FKBP-type domain; it reads GDIAVIDFKG…IKSIKVKELP (86 aa).

It belongs to the FKBP-type PPIase family. Tig subfamily.

The protein localises to the cytoplasm. It catalyses the reaction [protein]-peptidylproline (omega=180) = [protein]-peptidylproline (omega=0). In terms of biological role, involved in protein export. Acts as a chaperone by maintaining the newly synthesized protein in an open conformation. Functions as a peptidyl-prolyl cis-trans isomerase. The sequence is that of Trigger factor from Clostridium beijerinckii (strain ATCC 51743 / NCIMB 8052) (Clostridium acetobutylicum).